Reading from the N-terminus, the 128-residue chain is Gastrotropin (128 aa).

Alanine 2 bears the N-acetylalanine mark.

This sequence belongs to the calycin superfamily. Fatty-acid binding protein (FABP) family.

The protein resides in the cytoplasm. The protein localises to the membrane. In terms of biological role, binds to bile acids and is involved in enterohepatic bile acid metabolism. Required for efficient apical to basolateral transport of conjugated bile acids in ileal enterocytes. Stimulates gastric acid and pepsinogen secretion. The sequence is that of Gastrotropin (FABP6) from Bos taurus (Bovine).